The primary structure comprises 643 residues: MKCLFSPNFMWMAAVVTSWVIIPAATDTSSAKSCSECHSNATCTVDGAATTCACQEGFTGDGLECVDLDECAVLGAHNCSATKSCVNTLGSYTCVCPEGFLLSSELGCEDVDECAEPGLSRCHALATCINGEGNYSCVCPAGYLGDGRHCECSPGSCGPGLDCVREGDALVCVDPCQVHRILDEYWRSTEYGSGYICDVSLGGWYRFVGQAGVRLPETCVPVLHCNTAAPMWLNGTHPSSDEGIVNRVACAHWSGDCCLWDAPIQVKACAGGYYVYNLTAPPECHLAYCTDPSSVEGTCEECRVDEDCKSDNGEWHCQCKQDFNVTDLSLLERRLECGVDDIKLSLSKCQLKSLGFEKVFMYLHDSQCSGFTERGDRDWMSVVTPARDGPCGTVMTRNETHATYSNTLYLADEIIIRDLNIRINFACSYPLDMKVSLKTSLQPMVSALNISMGGTGTFTVRMALFQSPAYTQPYQGSSVTLSTEAFLYVGTMLDGGDLSRFVLLMTNCYATPSSNATDPLKYFIIQDRCPRAADSTIQVEENGESPQGRFSVQMFRFAGNYDLVYLHCEVYLCDTVNEKCRPTCPETRFRSGSIIDQTRVLNLGPITRKGGQAAMSRAAPSSLGLLQVWLPLLLSATLTLMSP.

The signal sequence occupies residues 1 to 26; sequence MKCLFSPNFMWMAAVVTSWVIIPAAT. The EGF-like 1 domain maps to 32 to 66; it reads KSCSECHSNATCTVDGAATTCACQEGFTGDGLECV. 21 disulfides stabilise this stretch: C34-C43, C37-C52, C54-C65, C71-C85, C79-C94, C96-C108, C114-C128, C122-C137, C139-C150, C152-C163, C157-C172, C176-C269, C197-C284, C219-C257, C225-C289, C250-C258, C299-C308, C302-C317, C319-C349, C337-C427, and C368-C391. Residue N40 is glycosylated (N-linked (GlcNAc...) asparagine). One can recognise an EGF-like 2; calcium-binding domain in the interval 67 to 109; the sequence is DLDECAVLGAHNCSATKSCVNTLGSYTCVCPEGFLLSSELGCE. A glycan (N-linked (GlcNAc...) asparagine) is linked at N78. The 42-residue stretch at 110 to 151 folds into the EGF-like 3; calcium-binding domain; sequence DVDECAEPGLSRCHALATCINGEGNYSCVCPAGYLGDGRHCE. N134 carries an N-linked (GlcNAc...) asparagine glycan. Residues 152-173 are beta hairpin; sequence CSPGSCGPGLDCVREGDALVCV. A D10C region spans residues 174–293; the sequence is DPCQVHRILD…CHLAYCTDPS (120 aa). Residue N234 is glycosylated (N-linked (GlcNAc...) asparagine). N277 is a glycosylation site (N-linked (GlcNAc...) asparagine). Positions 294 to 325 constitute an EGF-like 4 domain; it reads SVEGTCEECRVDEDCKSDNGEWHCQCKQDFNV. N324 carries N-linked (GlcNAc...) asparagine glycosylation. Residues 336–431 are ZP-N; sequence ECGVDDIKLS…RINFACSYPL (96 aa). Residues 336–587 form the ZP domain; that stretch reads ECGVDDIKLS…EKCRPTCPET (252 aa). N-linked (GlcNAc...) asparagine glycosylation is found at N398 and N449. The segment at 432–455 is flexible ZP-N/ZP-C linker; important for secretion and polymerization into filaments; sequence DMKVSLKTSLQPMVSALNISMGGT. The interval 456 to 466 is internal hydrophobic patch (IHP); it reads GTFTVRMALFQ. The ZP-C stretch occupies residues 456–587; that stretch reads GTFTVRMALF…EKCRPTCPET (132 aa). Disulfide bonds link C508–C568, C529–C584, and C573–C580. A glycan (N-linked (GlcNAc...) asparagine) is linked at N515. The interval 588–591 is essential for cleavage by HPN; sequence RFRS. The segment at 600 to 608 is external hydrophobic patch (EHP); regulates polymerization into filaments; sequence VLNLGPITR. S621 carries the GPI-anchor amidated serine lipid modification. A propeptide spans 622–643 (removed in mature form); that stretch reads SLGLLQVWLPLLLSATLTLMSP.

In terms of assembly, homodimer that then polymerizes into long filaments. The filaments can additionally assemble laterally to form a sheet. The filaments consist of a zigzag-shaped backbone with laterally protruding arms which interact with bacterial adhesin fimH. Two fimH molecules can bind to a single UMOD monomer. Post-translationally, N-glycosylated. Proteolytically cleaved at a conserved C-terminal proteolytic cleavage site to generate the secreted form found in urine. This cleavage is catalyzed by HPN.

It is found in the apical cell membrane. It localises to the basolateral cell membrane. The protein localises to the cell projection. Its subcellular location is the cilium membrane. The protein resides in the secreted. Its function is as follows. Functions in biogenesis and organization of the apical membrane of epithelial cells of the thick ascending limb of Henle's loop (TALH), where it promotes formation of complex filamentous gel-like structure that may play a role in the water barrier permeability. May serve as a receptor for binding and endocytosis of cytokines (IL-1, IL-2) and TNF. Facilitates neutrophil migration across renal epithelia. Functionally, in the urine, may contribute to colloid osmotic pressure, retards passage of positively charged electrolytes, and inhibits formation of liquid containing supersaturated salts and subsequent formation of salt crystals. Protects against urinary tract infections by binding to type 1 fimbriated E.coli. Binds to bacterial adhesin fimH which mediates the stable formation of bacterial aggregates, prevents the binding of E.coli to uroplakins UPK1A and UPK1B which act as urothelial receptors for type I fimbriae, and allows for pathogen clearance through micturation. Also promotes aggregation of other bacteria including K.pneumoniae, P.aeruginosa and S.mitis and so may also protect against other uropathogens. In Bos taurus (Bovine), this protein is Uromodulin (UMOD).